Consider the following 473-residue polypeptide: Aspartyl/glutamyl-tRNA(Asn/Gln) amidotransferase subunit B (473 aa).

Belongs to the GatB/GatE family. GatB subfamily. As to quaternary structure, heterotrimer of A, B and C subunits.

It catalyses the reaction L-glutamyl-tRNA(Gln) + L-glutamine + ATP + H2O = L-glutaminyl-tRNA(Gln) + L-glutamate + ADP + phosphate + H(+). The enzyme catalyses L-aspartyl-tRNA(Asn) + L-glutamine + ATP + H2O = L-asparaginyl-tRNA(Asn) + L-glutamate + ADP + phosphate + 2 H(+). Its function is as follows. Allows the formation of correctly charged Asn-tRNA(Asn) or Gln-tRNA(Gln) through the transamidation of misacylated Asp-tRNA(Asn) or Glu-tRNA(Gln) in organisms which lack either or both of asparaginyl-tRNA or glutaminyl-tRNA synthetases. The reaction takes place in the presence of glutamine and ATP through an activated phospho-Asp-tRNA(Asn) or phospho-Glu-tRNA(Gln). This chain is Aspartyl/glutamyl-tRNA(Asn/Gln) amidotransferase subunit B, found in Campylobacter hominis (strain ATCC BAA-381 / DSM 21671 / CCUG 45161 / LMG 19568 / NCTC 13146 / CH001A).